A 609-amino-acid polypeptide reads, in one-letter code: Probable ubiquitin-conjugating enzyme E2 25 (609 aa).

Disordered stretches follow at residues 70–99 (EEDEYAVGSPGDDYGYPESSPLSNSLLDPE) and 151–185 (ADKESASSSKSSHANNGNNSSKKATKASGIHSQFS). The span at 156-178 (ASSSKSSHANNGNNSSKKATKAS) shows a compositional bias: low complexity. The UBC core domain occupies 332–492 (DWAKRIQDEW…TFILSLKTMV (161 aa)). Cysteine 418 functions as the Glycyl thioester intermediate in the catalytic mechanism.

This sequence belongs to the ubiquitin-conjugating enzyme family. In terms of tissue distribution, expressed in seeds, pistils, siliques, hypocotyls and leaves.

It carries out the reaction S-ubiquitinyl-[E1 ubiquitin-activating enzyme]-L-cysteine + [E2 ubiquitin-conjugating enzyme]-L-cysteine = [E1 ubiquitin-activating enzyme]-L-cysteine + S-ubiquitinyl-[E2 ubiquitin-conjugating enzyme]-L-cysteine.. Its pathway is protein modification; protein ubiquitination. Functionally, accepts the ubiquitin from the E1 complex and catalyzes its covalent attachment to other proteins. The sequence is that of Probable ubiquitin-conjugating enzyme E2 25 (UBC25) from Arabidopsis thaliana (Mouse-ear cress).